A 177-amino-acid chain; its full sequence is Protein SPMIP1 (177 aa).

The interval 47–80 (SRLPRKLPTLLPQASVAPPPPASKTTPSKAPSPA) is disordered.

The sequence is that of Protein SPMIP1 (Spmip1) from Mus musculus (Mouse).